A 358-amino-acid polypeptide reads, in one-letter code: DNA polymerase IV (358 aa).

The UmuC domain occupies 4–185 (IIHIDMDCYF…LSLRKIPGVG (182 aa)). 2 residues coordinate Mg(2+): D8 and D103. E104 is a catalytic residue.

This sequence belongs to the DNA polymerase type-Y family. Monomer. Mg(2+) is required as a cofactor.

The protein resides in the cytoplasm. The enzyme catalyses DNA(n) + a 2'-deoxyribonucleoside 5'-triphosphate = DNA(n+1) + diphosphate. Poorly processive, error-prone DNA polymerase involved in untargeted mutagenesis. Copies undamaged DNA at stalled replication forks, which arise in vivo from mismatched or misaligned primer ends. These misaligned primers can be extended by PolIV. Exhibits no 3'-5' exonuclease (proofreading) activity. May be involved in translesional synthesis, in conjunction with the beta clamp from PolIII. The chain is DNA polymerase IV from Shewanella sp. (strain W3-18-1).